A 138-amino-acid polypeptide reads, in one-letter code: Ribosome-binding factor A (138 aa).

The interval 117-138 (ERQNKPAASTEKPPVGSLDADL) is disordered.

This sequence belongs to the RbfA family. In terms of assembly, monomer. Binds 30S ribosomal subunits, but not 50S ribosomal subunits or 70S ribosomes.

It localises to the cytoplasm. One of several proteins that assist in the late maturation steps of the functional core of the 30S ribosomal subunit. Associates with free 30S ribosomal subunits (but not with 30S subunits that are part of 70S ribosomes or polysomes). Required for efficient processing of 16S rRNA. May interact with the 5'-terminal helix region of 16S rRNA. This is Ribosome-binding factor A from Acaryochloris marina (strain MBIC 11017).